Consider the following 247-residue polypeptide: 3-deoxy-manno-octulosonate cytidylyltransferase (247 aa).

Belongs to the KdsB family.

The protein localises to the cytoplasm. It carries out the reaction 3-deoxy-alpha-D-manno-oct-2-ulosonate + CTP = CMP-3-deoxy-beta-D-manno-octulosonate + diphosphate. Its pathway is nucleotide-sugar biosynthesis; CMP-3-deoxy-D-manno-octulosonate biosynthesis; CMP-3-deoxy-D-manno-octulosonate from 3-deoxy-D-manno-octulosonate and CTP: step 1/1. It functions in the pathway bacterial outer membrane biogenesis; lipopolysaccharide biosynthesis. Activates KDO (a required 8-carbon sugar) for incorporation into bacterial lipopolysaccharide in Gram-negative bacteria. The sequence is that of 3-deoxy-manno-octulosonate cytidylyltransferase from Chlorobium limicola (strain DSM 245 / NBRC 103803 / 6330).